A 311-amino-acid polypeptide reads, in one-letter code: Putative pyruvate, phosphate dikinase regulatory protein (311 aa).

Gly180–Thr187 contributes to the ADP binding site.

It belongs to the pyruvate, phosphate/water dikinase regulatory protein family. PDRP subfamily.

It catalyses the reaction N(tele)-phospho-L-histidyl/L-threonyl-[pyruvate, phosphate dikinase] + ADP = N(tele)-phospho-L-histidyl/O-phospho-L-threonyl-[pyruvate, phosphate dikinase] + AMP + H(+). The catalysed reaction is N(tele)-phospho-L-histidyl/O-phospho-L-threonyl-[pyruvate, phosphate dikinase] + phosphate + H(+) = N(tele)-phospho-L-histidyl/L-threonyl-[pyruvate, phosphate dikinase] + diphosphate. Bifunctional serine/threonine kinase and phosphorylase involved in the regulation of the pyruvate, phosphate dikinase (PPDK) by catalyzing its phosphorylation/dephosphorylation. The polypeptide is Putative pyruvate, phosphate dikinase regulatory protein (Paramagnetospirillum magneticum (strain ATCC 700264 / AMB-1) (Magnetospirillum magneticum)).